We begin with the raw amino-acid sequence, 167 residues long: Ribosome maturation factor RimM (167 aa).

One can recognise a PRC barrel domain in the interval 94-165 (ENEFYYSDII…KIIITPMEGL (72 aa)).

The protein belongs to the RimM family. As to quaternary structure, binds ribosomal protein uS19.

It is found in the cytoplasm. Functionally, an accessory protein needed during the final step in the assembly of 30S ribosomal subunit, possibly for assembly of the head region. Essential for efficient processing of 16S rRNA. May be needed both before and after RbfA during the maturation of 16S rRNA. It has affinity for free ribosomal 30S subunits but not for 70S ribosomes. This Staphylococcus aureus (strain Mu3 / ATCC 700698) protein is Ribosome maturation factor RimM.